The chain runs to 292 residues: Ribosomal protein L11 methyltransferase (292 aa).

Residues T144, G165, D187, and N229 each contribute to the S-adenosyl-L-methionine site.

It belongs to the methyltransferase superfamily. PrmA family.

It localises to the cytoplasm. It carries out the reaction L-lysyl-[protein] + 3 S-adenosyl-L-methionine = N(6),N(6),N(6)-trimethyl-L-lysyl-[protein] + 3 S-adenosyl-L-homocysteine + 3 H(+). Methylates ribosomal protein L11. This chain is Ribosomal protein L11 methyltransferase, found in Pseudomonas fluorescens (strain Pf0-1).